Consider the following 249-residue polypeptide: Segregation and condensation protein A (249 aa).

It belongs to the ScpA family. Component of a cohesin-like complex composed of ScpA, ScpB and the Smc homodimer, in which ScpA and ScpB bind to the head domain of Smc. The presence of the three proteins is required for the association of the complex with DNA.

Its subcellular location is the cytoplasm. Its function is as follows. Participates in chromosomal partition during cell division. May act via the formation of a condensin-like complex containing Smc and ScpB that pull DNA away from mid-cell into both cell halves. The chain is Segregation and condensation protein A from Clostridium acetobutylicum (strain ATCC 824 / DSM 792 / JCM 1419 / IAM 19013 / LMG 5710 / NBRC 13948 / NRRL B-527 / VKM B-1787 / 2291 / W).